The following is an 84-amino-acid chain: Small ribosomal subunit protein uS17 (84 aa).

It belongs to the universal ribosomal protein uS17 family. As to quaternary structure, part of the 30S ribosomal subunit.

One of the primary rRNA binding proteins, it binds specifically to the 5'-end of 16S ribosomal RNA. This chain is Small ribosomal subunit protein uS17, found in Actinobacillus pleuropneumoniae serotype 5b (strain L20).